Consider the following 860-residue polypeptide: Transcription factor E2F8 (860 aa).

A disordered region spans residues 1 to 114; sequence MENQKENLFS…NEKSQPSRKE (114 aa). Ser71 carries the post-translational modification Phosphoserine. Basic and acidic residues-rich tracts occupy residues 74–84 and 92–114; these read IRSRDQKRGLS and EARD…SRKE. 2 DNA-binding regions span residues 112 to 181 and 261 to 347; these read RKEK…TWHG and RKDK…KWTG. 2 disordered regions span residues 407–433 and 533–616; these read RRKI…PPVP and TPPH…PKED. Over residues 411 to 426 the composition is skewed to low complexity; it reads SSAPSSPVKSSKAESS. Phosphoserine is present on residues Ser412 and Ser416. Residues 542–554 are compositionally biased toward polar residues; it reads VCPTQSSNATGSK. 2 stretches are compositionally biased toward basic and acidic residues: residues 555-565 and 586-596; these read DPTDAPTEKTA and RSKETTGDRGT.

It belongs to the E2F/DP family. In terms of assembly, homodimer and heterodimer: mainly forms homodimers and, to a lesser extent, heterodimers with E2F8. Dimerization is important for DNA-binding. Interacts with HIF1A.

The protein localises to the nucleus. In terms of biological role, atypical E2F transcription factor that participates in various processes such as angiogenesis and polyploidization of specialized cells. Mainly acts as a transcription repressor that binds DNA independently of DP proteins and specifically recognizes the E2 recognition site 5'-TTTC[CG]CGC-3'. Directly represses transcription of classical E2F transcription factors such as E2F1: component of a feedback loop in S phase by repressing the expression of E2F1, thereby preventing p53/TP53-dependent apoptosis. Plays a key role in polyploidization of cells in placenta and liver by regulating the endocycle, probably by repressing genes promoting cytokinesis and antagonizing action of classical E2F proteins (E2F1, E2F2 and/or E2F3). Required for placental development by promoting polyploidization of trophoblast giant cells. Acts as a promoter of sprouting angiogenesis, possibly by acting as a transcription activator: associates with HIF1A, recognizes and binds the VEGFA promoter, which is different from canonical E2 recognition site, and activates expression of the VEGFA gene. The chain is Transcription factor E2F8 (E2f8) from Rattus norvegicus (Rat).